The chain runs to 389 residues: Succinate--CoA ligase [ADP-forming] subunit beta (389 aa).

Residues 9 to 244 (KQLLAEYGIP…KTQEDPTEVI (236 aa)) enclose the ATP-grasp domain. ATP-binding positions include Lys-46, 53–55 (GRG), Gly-102, and Glu-107. Mg(2+) contacts are provided by Asn-199 and Asp-213. Residues Asn-264 and 321-323 (GIV) each bind substrate.

This sequence belongs to the succinate/malate CoA ligase beta subunit family. In terms of assembly, heterotetramer of two alpha and two beta subunits. It depends on Mg(2+) as a cofactor.

It catalyses the reaction succinate + ATP + CoA = succinyl-CoA + ADP + phosphate. The catalysed reaction is GTP + succinate + CoA = succinyl-CoA + GDP + phosphate. It participates in carbohydrate metabolism; tricarboxylic acid cycle; succinate from succinyl-CoA (ligase route): step 1/1. Functionally, succinyl-CoA synthetase functions in the citric acid cycle (TCA), coupling the hydrolysis of succinyl-CoA to the synthesis of either ATP or GTP and thus represents the only step of substrate-level phosphorylation in the TCA. The beta subunit provides nucleotide specificity of the enzyme and binds the substrate succinate, while the binding sites for coenzyme A and phosphate are found in the alpha subunit. This Stenotrophomonas maltophilia (strain R551-3) protein is Succinate--CoA ligase [ADP-forming] subunit beta.